The following is a 329-amino-acid chain: Biotin synthase (329 aa).

Residues 48–278 (FVGDKVYLCS…SKKISVCGGR (231 aa)) form the Radical SAM core domain. Residues cysteine 66, cysteine 70, and cysteine 73 each coordinate [4Fe-4S] cluster. [2Fe-2S] cluster-binding residues include serine 143 and cysteine 203.

It belongs to the radical SAM superfamily. Biotin synthase family. In terms of assembly, homodimer. Requires [4Fe-4S] cluster as cofactor. [2Fe-2S] cluster is required as a cofactor.

The enzyme catalyses (4R,5S)-dethiobiotin + (sulfur carrier)-SH + 2 reduced [2Fe-2S]-[ferredoxin] + 2 S-adenosyl-L-methionine = (sulfur carrier)-H + biotin + 2 5'-deoxyadenosine + 2 L-methionine + 2 oxidized [2Fe-2S]-[ferredoxin]. The protein operates within cofactor biosynthesis; biotin biosynthesis; biotin from 7,8-diaminononanoate: step 2/2. Catalyzes the conversion of dethiobiotin (DTB) to biotin by the insertion of a sulfur atom into dethiobiotin via a radical-based mechanism. The polypeptide is Biotin synthase (Geotalea uraniireducens (strain Rf4) (Geobacter uraniireducens)).